The chain runs to 346 residues: Uroporphyrinogen decarboxylase (346 aa).

Substrate is bound by residues 26 to 30, Asp-76, Tyr-153, Ser-208, and His-323; that span reads RQAGR.

Belongs to the uroporphyrinogen decarboxylase family. As to quaternary structure, homodimer.

The protein localises to the cytoplasm. It catalyses the reaction uroporphyrinogen III + 4 H(+) = coproporphyrinogen III + 4 CO2. It participates in porphyrin-containing compound metabolism; protoporphyrin-IX biosynthesis; coproporphyrinogen-III from 5-aminolevulinate: step 4/4. Catalyzes the decarboxylation of four acetate groups of uroporphyrinogen-III to yield coproporphyrinogen-III. The polypeptide is Uroporphyrinogen decarboxylase (Prochlorococcus marinus (strain AS9601)).